A 486-amino-acid chain; its full sequence is Maintenance of mitochondrial morphology protein 1 (486 aa).

Residues methionine 1–glycine 19 are Lumenal-facing. A helical transmembrane segment spans residues leucine 20–phenylalanine 40. The Cytoplasmic segment spans residues glycine 41–threonine 486. Disordered regions lie at residues proline 45–leucine 98, glutamine 269–threonine 318, valine 393–threonine 412, and alanine 420–threonine 486. Over residues glutamine 51–serine 61 the composition is skewed to basic residues. Basic and acidic residues predominate over residues leucine 70–proline 79. 4 stretches are compositionally biased toward polar residues: residues serine 80–serine 96, glutamine 269–serine 291, glutamate 307–threonine 318, and glutamate 401–threonine 412. Residues glutamine 125–proline 382 enclose the SMP-LTD domain. Composition is skewed to basic and acidic residues over residues histidine 429 to arginine 440 and aspartate 462 to phenylalanine 473.

This sequence belongs to the MMM1 family. As to quaternary structure, homodimer. Component of the ER-mitochondria encounter structure (ERMES) or MDM complex, composed of MMM1, MDM10, MDM12 and MDM34. An MMM1 homodimer associates with one molecule of MDM12 on each side in a pairwise head-to-tail manner, and the SMP-LTD domains of MMM1 and MDM12 generate a continuous hydrophobic tunnel for phospholipid trafficking.

The protein localises to the endoplasmic reticulum membrane. Its function is as follows. Component of the ERMES/MDM complex, which serves as a molecular tether to connect the endoplasmic reticulum (ER) and mitochondria. Components of this complex are involved in the control of mitochondrial shape and protein biogenesis, and function in nonvesicular lipid trafficking between the ER and mitochondria. The MDM12-MMM1 subcomplex functions in the major beta-barrel assembly pathway that is responsible for biogenesis of all outer membrane beta-barrel proteins, and acts in a late step after the SAM complex. The MDM10-MDM12-MMM1 subcomplex further acts in the TOM40-specific pathway after the action of the MDM12-MMM1 complex. Essential for establishing and maintaining the structure of mitochondria and maintenance of mtDNA nucleoids. The polypeptide is Maintenance of mitochondrial morphology protein 1 (Coccidioides immitis (strain RS) (Valley fever fungus)).